Reading from the N-terminus, the 269-residue chain is UPF0162 protein YchA (269 aa).

The protein belongs to the UPF0162 family.

This Escherichia coli O157:H7 protein is UPF0162 protein YchA (ychA).